A 208-amino-acid chain; its full sequence is LexA repressor (208 aa).

The segment at residues 28-48 (RAEIARELGFRSANAAEEHLK) is a DNA-binding region (H-T-H motif). Catalysis depends on for autocatalytic cleavage activity residues S125 and K162.

It belongs to the peptidase S24 family. In terms of assembly, homodimer.

It carries out the reaction Hydrolysis of Ala-|-Gly bond in repressor LexA.. In terms of biological role, represses a number of genes involved in the response to DNA damage (SOS response), including recA and lexA. In the presence of single-stranded DNA, RecA interacts with LexA causing an autocatalytic cleavage which disrupts the DNA-binding part of LexA, leading to derepression of the SOS regulon and eventually DNA repair. The sequence is that of LexA repressor from Aliivibrio fischeri (strain ATCC 700601 / ES114) (Vibrio fischeri).